A 292-amino-acid chain; its full sequence is Aquaporin-3 (292 aa).

The Cytoplasmic portion of the chain corresponds to 1–24 (MGRQKELVSRCGEMLHIRYRLLRQ). The helical transmembrane segment at 25–42 (ALAECLGTLILVMFGCGS) threads the bilayer. Topologically, residues 43–56 (VAQVVLSRGTHGGF) are extracellular. A helical membrane pass occupies residues 57–74 (LTINLAFGFAVTLGILIA). At 75–78 (GQVS) the chain is on the cytoplasmic side. Positions 79–92 (GAHLNPAVTFAMCF) form an intramembrane region, discontinuously helical. The short motif at 83-85 (NPA) is the NPA 1 element. Topologically, residues 93–100 (LAREPWIK) are cytoplasmic. Residues 101–121 (LPIYTLAQTLGAFLGAGIVFG) traverse the membrane as a helical segment. Topologically, residues 122–159 (LYYDAIWHFADNQLFVSGPNGTAGIFATYPSGHLDMIN) are extracellular. An N-linked (GlcNAc...) asparagine glycan is attached at Asn141. The chain crosses the membrane as a helical span at residues 160–177 (GFFDQFIGTASLIVCVLA). At 178-189 (IVDPYNNPVPRG) the chain is on the cytoplasmic side. Residues 190–206 (LEAFTVGLVVLVIGTSM) traverse the membrane as a helical segment. Over 207 to 210 (GFNS) the chain is Extracellular. Positions 211 to 224 (GYAVNPARDFGPRL) form an intramembrane region, discontinuously helical. Positions 215–217 (NPA) match the NPA 2 motif. Residues 225-242 (FTALAGWGSAVFTTGQHW) are Extracellular-facing. A helical transmembrane segment spans residues 243–264 (WWVPIVSPLLGSIAGVFVYQLM). Over 265–292 (IGCHLEQPPPSNEEENVKLAHVKHKEQI) the chain is Cytoplasmic.

It belongs to the MIP/aquaporin (TC 1.A.8) family. Homotetramer; each monomer provides an independent glycerol/water pore. Could also exist in other oligomeric states. In terms of tissue distribution, widely expressed in epithelial cells of kidney (collecting ducts) and airways, in keratinocytes, immature dendritic cells and erythrocytes. Isoform 2 is not detectable in erythrocytes at the protein level.

It is found in the cell membrane. The protein resides in the basolateral cell membrane. It carries out the reaction glycerol(in) = glycerol(out). The enzyme catalyses H2O(in) = H2O(out). It catalyses the reaction H2O2(out) = H2O2(in). The catalysed reaction is urea(in) = urea(out). With respect to regulation, glycerol transport is regulated by pH, with the porin being permeable to glycerol at pH 7.4 but not at pH 5.5. Water permeability, however, is not influenced by pH. Functionally, aquaglyceroporins form homotetrameric transmembrane channels, with each monomer independently mediating glycerol and water transport across the plasma membrane along their osmotic gradient. Could also be permeable to urea. Also participates in cell permeability to H2O2 and H2O2-mediated signaling. In skin, transports glycerol to the epidermis and stratum corneum, where it maintains hydration, elasticity, and supports lipid biosynthesis for barrier repair. In kidney, contributes to the reabsorption of water, helping the body maintain proper fluid balance. In Homo sapiens (Human), this protein is Aquaporin-3.